Here is a 249-residue protein sequence, read N- to C-terminus: AA9 family lytic polysaccharide monooxygenase A (249 aa).

The signal sequence occupies residues 1–21 (MALSKIAALSTILASASLVAG). Position 22 (histidine 22) interacts with Cu(2+). Methylhistidine is present on histidine 22. N-linked (GlcNAc...) asparagine glycans are attached at residues asparagine 34 and asparagine 80. 2 disulfides stabilise this stretch: cysteine 77–cysteine 199 and cysteine 118–cysteine 122. Histidine 107 serves as a coordination point for Cu(2+). O2 contacts are provided by histidine 185 and glutamine 194. Tyrosine 196 contacts Cu(2+).

The protein belongs to the polysaccharide monooxygenase AA9 family. Cu(2+) is required as a cofactor. Post-translationally, the catalytically essential N-terminal histidine His-22 is post-translationally modified by methylation to prevent protonation of the histidine side chain, and protect the critical active site of the enzyme from oxidative damage.

It localises to the secreted. The catalysed reaction is [(1-&gt;4)-beta-D-glucosyl]n+m + reduced acceptor + O2 = 4-dehydro-beta-D-glucosyl-[(1-&gt;4)-beta-D-glucosyl]n-1 + [(1-&gt;4)-beta-D-glucosyl]m + acceptor + H2O.. In terms of biological role, lytic polysaccharide monooxygenase (LPMO) that exhibits a mixed C1/C4 oxidative cleavage activity on cellulose and xyloglucan. Catalysis by LPMOs requires the reduction of the active-site copper from Cu(II) to Cu(I) by a reducing agent and H(2)O(2) or O(2) as a cosubstrate. Shows a higher boosting effect with cellulases on the enzymatic saccharification of complex lignocellulosic substrates associated with xyloglucan than on the lignocellulosic substrates without xyloglucan. The oxidative cleavage of xyloglucan by LPMO9A may facilitate to open up the sterical hindrance of cellulose by xyloglucan and thereby increase accessibility for cellulase to lignocellulosic substrates. The polypeptide is AA9 family lytic polysaccharide monooxygenase A (Penicillium parvum (Eupenicillium parvum)).